A 120-amino-acid polypeptide reads, in one-letter code: SPbeta prophage-derived DSR anti-defense 1 (120 aa).

Belongs to the DSR anti-defense 1 family. In terms of assembly, interacts with Bacillus subtilis DSR2 (via C-terminus) in a 2:4 ratio; this interaction leads to the absence of activation of the NADase defense activity of DSR2.

Its function is as follows. Counteracts the defense-associated sirtuin 2 (DSR2) defense system of the host. Inhibits the NADase activity of host DSR2 by competing with the tail tube protein that normally activates DSR2. This Bacillus subtilis (strain 168) protein is SPbeta prophage-derived DSR anti-defense 1 (yotI).